A 400-amino-acid polypeptide reads, in one-letter code: 3-phenylpropionate/cinnamic acid dioxygenase ferredoxin--NAD(+) reductase component (400 aa).

An FAD-binding site is contributed by 5-36 (TIIIVGGGQAAAMAAASLRQQGFTGELHLFSD). Residue 146–174 (SVVIVGAGTIGLELAASATQRRCKVTVIE) participates in NAD(+) binding.

The protein belongs to the bacterial ring-hydroxylating dioxygenase ferredoxin reductase family. In terms of assembly, this dioxygenase system consists of four proteins: the two subunits of the hydroxylase component (HcaE and HcaF), a ferredoxin (HcaC) and a ferredoxin reductase (HcaD). The cofactor is FAD.

The catalysed reaction is 2 reduced [2Fe-2S]-[ferredoxin] + NAD(+) + H(+) = 2 oxidized [2Fe-2S]-[ferredoxin] + NADH. It functions in the pathway aromatic compound metabolism; 3-phenylpropanoate degradation. Its function is as follows. Part of the multicomponent 3-phenylpropionate dioxygenase, that converts 3-phenylpropionic acid (PP) and cinnamic acid (CI) into 3-phenylpropionate-dihydrodiol (PP-dihydrodiol) and cinnamic acid-dihydrodiol (CI-dihydrodiol), respectively. The polypeptide is 3-phenylpropionate/cinnamic acid dioxygenase ferredoxin--NAD(+) reductase component (Shigella sonnei (strain Ss046)).